Here is a 323-residue protein sequence, read N- to C-terminus: Cyclin-D5-1 (323 aa).

Disordered regions lie at residues 17–36 and 281–323; these read ESSLNEDDDETIERSDKQEP and HMTP…MRRL.

It belongs to the cyclin family. Cyclin D subfamily.

The chain is Cyclin-D5-1 (CYCD5-1) from Arabidopsis thaliana (Mouse-ear cress).